A 70-amino-acid chain; its full sequence is uncharacterized protein (70 aa).

The segment at 40–70 (LHQQRTAHKVTSPPSQRPQNSETKSDSQNRS) is disordered. Residues 51-61 (SPPSQRPQNSE) show a composition bias toward polar residues.

This is an uncharacterized protein from Bdellovibrio phage phiMH2K (Bacteriophage phiMH2K).